Consider the following 131-residue polypeptide: Phosphomevalonate dehydratase small subunit (131 aa).

Ser62 acts as the Proton acceptor in catalysis.

This sequence belongs to the AcnX type II small subunit family. In terms of assembly, heterodimer composed of a large subunit (PMDh-L) and a small subunit (PMDh-S).

It catalyses the reaction (R)-5-phosphomevalonate = (2E)-3-methyl-5-phosphooxypent-2-enoate + H2O. It functions in the pathway isoprenoid biosynthesis; isopentenyl diphosphate biosynthesis via mevalonate pathway. Functionally, component of a hydro-lyase that catalyzes the dehydration of mevalonate 5-phosphate (MVA5P) to form trans-anhydromevalonate 5-phosphate (tAHMP). Involved in the archaeal mevalonate (MVA) pathway, which provides fundamental precursors for isoprenoid biosynthesis, such as isopentenyl diphosphate (IPP) and dimethylallyl diphosphate (DMAPP). The protein is Phosphomevalonate dehydratase small subunit of Methanothermobacter thermautotrophicus (strain ATCC 29096 / DSM 1053 / JCM 10044 / NBRC 100330 / Delta H) (Methanobacterium thermoautotrophicum).